Consider the following 202-residue polypeptide: Shikimate kinase (202 aa).

Residue 20–25 (GSGKST) coordinates ATP. Ser-24 contacts Mg(2+). Asp-42, Arg-66, and Gly-88 together coordinate substrate. An ATP-binding site is contributed by Arg-126. Substrate is bound at residue Arg-153.

It belongs to the shikimate kinase family. In terms of assembly, monomer. It depends on Mg(2+) as a cofactor.

It is found in the cytoplasm. The enzyme catalyses shikimate + ATP = 3-phosphoshikimate + ADP + H(+). It participates in metabolic intermediate biosynthesis; chorismate biosynthesis; chorismate from D-erythrose 4-phosphate and phosphoenolpyruvate: step 5/7. Its function is as follows. Catalyzes the specific phosphorylation of the 3-hydroxyl group of shikimic acid using ATP as a cosubstrate. The chain is Shikimate kinase from Chlorobium luteolum (strain DSM 273 / BCRC 81028 / 2530) (Pelodictyon luteolum).